The chain runs to 954 residues: Valine--tRNA ligase (954 aa).

The 'HIGH' region motif lies at 48–58 (PNVTGSLHMGH). Positions 560–564 (KMSKS) match the 'KMSKS' region motif. K563 is a binding site for ATP. The stretch at 883–953 (AGFINKEAEL…LKQQYLAIEA (71 aa)) forms a coiled coil.

The protein belongs to the class-I aminoacyl-tRNA synthetase family. ValS type 1 subfamily. As to quaternary structure, monomer.

The protein localises to the cytoplasm. It carries out the reaction tRNA(Val) + L-valine + ATP = L-valyl-tRNA(Val) + AMP + diphosphate. In terms of biological role, catalyzes the attachment of valine to tRNA(Val). As ValRS can inadvertently accommodate and process structurally similar amino acids such as threonine, to avoid such errors, it has a 'posttransfer' editing activity that hydrolyzes mischarged Thr-tRNA(Val) in a tRNA-dependent manner. The polypeptide is Valine--tRNA ligase (Pasteurella multocida (strain Pm70)).